The primary structure comprises 157 residues: Ribosome maturation factor RimP (157 aa).

This sequence belongs to the RimP family.

The protein localises to the cytoplasm. In terms of biological role, required for maturation of 30S ribosomal subunits. This Limosilactobacillus reuteri (strain DSM 20016) (Lactobacillus reuteri) protein is Ribosome maturation factor RimP.